A 119-amino-acid chain; its full sequence is Large ribosomal subunit protein bL20 (119 aa).

Belongs to the bacterial ribosomal protein bL20 family.

Binds directly to 23S ribosomal RNA and is necessary for the in vitro assembly process of the 50S ribosomal subunit. It is not involved in the protein synthesizing functions of that subunit. In Thiobacillus denitrificans (strain ATCC 25259 / T1), this protein is Large ribosomal subunit protein bL20.